The sequence spans 201 residues: Cobalt-precorrin-7 C(5)-methyltransferase (201 aa).

This sequence belongs to the precorrin methyltransferase family.

The enzyme catalyses Co-precorrin-7 + S-adenosyl-L-methionine = Co-precorrin-8X + S-adenosyl-L-homocysteine + H(+). It participates in cofactor biosynthesis; adenosylcobalamin biosynthesis; cob(II)yrinate a,c-diamide from sirohydrochlorin (anaerobic route): step 8/10. Catalyzes the methylation of C-5 in cobalt-precorrin-7 to form cobalt-precorrin-8. This Salmonella typhi protein is Cobalt-precorrin-7 C(5)-methyltransferase (cbiE).